Here is a 463-residue protein sequence, read N- to C-terminus: Methionine aminopeptidase 2-1 (463 aa).

The segment at 1–98 is disordered; the sequence is MGSKTPEEQI…PPRVPLSDLF (98 aa). Positions 30–45 are enriched in basic and acidic residues; the sequence is RGTHLSRDGDGSLGDH. Acidic residues predominate over residues 46–55; sequence GDDDDADEDD. Over residues 69–81 the composition is skewed to basic residues; the sequence is KKKKRPKKKKKPA. His214 contacts substrate. 3 residues coordinate a divalent metal cation: Asp235, Asp246, and His315. Substrate is bound at residue His323. Positions 348 and 444 each coordinate a divalent metal cation.

This sequence belongs to the peptidase M24A family. Methionine aminopeptidase eukaryotic type 2 subfamily. The cofactor is Co(2+). Requires Zn(2+) as cofactor. Mn(2+) serves as cofactor. It depends on Fe(2+) as a cofactor.

The protein localises to the cytoplasm. The catalysed reaction is Release of N-terminal amino acids, preferentially methionine, from peptides and arylamides.. Cotranslationally removes the N-terminal methionine from nascent proteins. The N-terminal methionine is often cleaved when the second residue in the primary sequence is small and uncharged (Met-Ala-, Cys, Gly, Pro, Ser, Thr, or Val). The polypeptide is Methionine aminopeptidase 2-1 (Colletotrichum graminicola (strain M1.001 / M2 / FGSC 10212) (Maize anthracnose fungus)).